Consider the following 184-residue polypeptide: MYLLVNFIVALAVLQVQAGSSYIPDSDRNTRTLQNDLQVERDGKYRYAYETSNGISASQEGLGGVAVQGGSSYTSPEGEVISVNYVADEFGYHPVGAHIPQVPDYILRSLEYIRTHPYQIKDYYTGELKTVEHDAAAFNVYTRNIQDHTIPQSRPSTTPKTIYLTHPPTTTSRPLRQRRALPTH.

The signal sequence occupies residues methionine 1–glutamine 15. A Chitin-binding type R&amp;R domain is found at aspartate 42–proline 103. Polar residues predominate over residues aspartate 147–lysine 160. Positions aspartate 147–histidine 184 are disordered. Positions leucine 175–histidine 184 are enriched in basic residues.

Functionally, component of the cuticle of the pupa of fruit fly. This chain is Pupal cuticle protein (Pcp), found in Drosophila melanogaster (Fruit fly).